A 308-amino-acid chain; its full sequence is Acetaldehyde dehydrogenase 2 (308 aa).

12–15 serves as a coordination point for NAD(+); sequence SGNI. Catalysis depends on Cys-127, which acts as the Acyl-thioester intermediate. NAD(+) is bound by residues 162–170 and Asn-281; that span reads SAGPGTRAN.

The protein belongs to the acetaldehyde dehydrogenase family.

The enzyme catalyses acetaldehyde + NAD(+) + CoA = acetyl-CoA + NADH + H(+). The chain is Acetaldehyde dehydrogenase 2 from Mycobacterium marinum (strain ATCC BAA-535 / M).